The following is a 417-amino-acid chain: Glutamyl-tRNA reductase (417 aa).

Substrate contacts are provided by residues 48-51, S100, 105-107, and Q111; these read TCNR and EDQ. C49 (nucleophile) is an active-site residue. 180-185 is an NADP(+) binding site; the sequence is GAGETG.

This sequence belongs to the glutamyl-tRNA reductase family. In terms of assembly, homodimer.

The enzyme catalyses (S)-4-amino-5-oxopentanoate + tRNA(Glu) + NADP(+) = L-glutamyl-tRNA(Glu) + NADPH + H(+). It functions in the pathway porphyrin-containing compound metabolism; protoporphyrin-IX biosynthesis; 5-aminolevulinate from L-glutamyl-tRNA(Glu): step 1/2. Its function is as follows. Catalyzes the NADPH-dependent reduction of glutamyl-tRNA(Glu) to glutamate 1-semialdehyde (GSA). This chain is Glutamyl-tRNA reductase, found in Methanothrix thermoacetophila (strain DSM 6194 / JCM 14653 / NBRC 101360 / PT) (Methanosaeta thermophila).